Here is a 367-residue protein sequence, read N- to C-terminus: Anthranilate phosphoribosyltransferase (367 aa).

Residues 1 to 17 show a composition bias toward low complexity; the sequence is MVLSSEASSAADHSAAA. Residues 1 to 22 form a disordered region; sequence MVLSSEASSAADHSAAAPIPTS. Residues glycine 104, 107 to 108, threonine 112, 114 to 117, 132 to 140, and glycine 144 each bind 5-phospho-alpha-D-ribose 1-diphosphate; these read GD, NLST, and KHGNRAASS. Glycine 104 provides a ligand contact to anthranilate. Serine 116 is a Mg(2+) binding site. Asparagine 135 lines the anthranilate pocket. Position 190 (arginine 190) interacts with anthranilate. The Mg(2+) site is built by aspartate 248 and glutamate 249.

It belongs to the anthranilate phosphoribosyltransferase family. In terms of assembly, homodimer. The cofactor is Mg(2+).

It carries out the reaction N-(5-phospho-beta-D-ribosyl)anthranilate + diphosphate = 5-phospho-alpha-D-ribose 1-diphosphate + anthranilate. The protein operates within amino-acid biosynthesis; L-tryptophan biosynthesis; L-tryptophan from chorismate: step 2/5. In terms of biological role, catalyzes the transfer of the phosphoribosyl group of 5-phosphorylribose-1-pyrophosphate (PRPP) to anthranilate to yield N-(5'-phosphoribosyl)-anthranilate (PRA). The polypeptide is Anthranilate phosphoribosyltransferase (Mycobacterium ulcerans (strain Agy99)).